The chain runs to 478 residues: 3-isopropylmalate dehydratase large subunit (478 aa).

3 residues coordinate [4Fe-4S] cluster: Cys357, Cys418, and Cys421.

Belongs to the aconitase/IPM isomerase family. LeuC type 1 subfamily. Heterodimer of LeuC and LeuD. Requires [4Fe-4S] cluster as cofactor.

The enzyme catalyses (2R,3S)-3-isopropylmalate = (2S)-2-isopropylmalate. Its pathway is amino-acid biosynthesis; L-leucine biosynthesis; L-leucine from 3-methyl-2-oxobutanoate: step 2/4. In terms of biological role, catalyzes the isomerization between 2-isopropylmalate and 3-isopropylmalate, via the formation of 2-isopropylmaleate. The polypeptide is 3-isopropylmalate dehydratase large subunit (Novosphingobium aromaticivorans (strain ATCC 700278 / DSM 12444 / CCUG 56034 / CIP 105152 / NBRC 16084 / F199)).